We begin with the raw amino-acid sequence, 436 residues long: Sarcosine reductase complex component B subunit beta (436 aa).

Selenocysteine 350 is a catalytic residue. Residue selenocysteine 350 is a non-standard amino acid, selenocysteine.

The protein belongs to the GrdB/GrdF/GrdH family. In terms of assembly, heterotetramer of two alpha and two beta subunits. Component of the sarcosine reductase complex, together with components A and C. PB is substrate specific.

The enzyme catalyses acetyl phosphate + methylamine + [thioredoxin]-disulfide + H2O = sarcosine + [thioredoxin]-dithiol + phosphate + H(+). Its function is as follows. In the first step of sarcosine reductase, the substrate is bound to component PB via a Schiff base intermediate. Then the PB-activated substrate is nucleophilically attacked by the selenol anion of component PA to transform it to a carboxymethylated selenoether and the respective amine. By action of component PC, acetyl phosphate is formed, leaving component PA in its oxidized state. Finally component PA becomes reduced by the thioredoxin system to start a new catalytic cycle of reductive deamination. This Peptoclostridium acidaminophilum (Eubacterium acidaminophilum) protein is Sarcosine reductase complex component B subunit beta (grdF).